The chain runs to 308 residues: uncharacterized protein (308 aa).

This is an uncharacterized protein from Acanthamoeba polyphaga (Amoeba).